The primary structure comprises 387 residues: Phosphoglycerate kinase (387 aa).

Residues 21–23 (DLN), Arg-36, 59–62 (HLGR), Arg-113, and Arg-146 contribute to the substrate site. ATP contacts are provided by residues Lys-197, Glu-314, and 340 to 343 (GGDT).

The protein belongs to the phosphoglycerate kinase family. In terms of assembly, monomer.

The protein resides in the cytoplasm. The enzyme catalyses (2R)-3-phosphoglycerate + ATP = (2R)-3-phospho-glyceroyl phosphate + ADP. It participates in carbohydrate degradation; glycolysis; pyruvate from D-glyceraldehyde 3-phosphate: step 2/5. This is Phosphoglycerate kinase from Pseudomonas savastanoi pv. phaseolicola (strain 1448A / Race 6) (Pseudomonas syringae pv. phaseolicola (strain 1448A / Race 6)).